The primary structure comprises 193 residues: Iron-sulfur flavoprotein MJ1083 (193 aa).

Residues cysteine 47, cysteine 50, cysteine 53, and cysteine 59 each contribute to the [4Fe-4S] cluster site.

It belongs to the SsuE family. Isf subfamily. In terms of assembly, homodimer. The cofactor is FMN. [4Fe-4S] cluster is required as a cofactor.

Redox-active protein probably involved in electron transport. This is Iron-sulfur flavoprotein MJ1083 from Methanocaldococcus jannaschii (strain ATCC 43067 / DSM 2661 / JAL-1 / JCM 10045 / NBRC 100440) (Methanococcus jannaschii).